A 253-amino-acid chain; its full sequence is 5'/3'-nucleotidase SurE (253 aa).

4 residues coordinate a divalent metal cation: aspartate 8, aspartate 9, serine 39, and asparagine 92.

The protein belongs to the SurE nucleotidase family. It depends on a divalent metal cation as a cofactor.

Its subcellular location is the cytoplasm. It carries out the reaction a ribonucleoside 5'-phosphate + H2O = a ribonucleoside + phosphate. The enzyme catalyses a ribonucleoside 3'-phosphate + H2O = a ribonucleoside + phosphate. The catalysed reaction is [phosphate](n) + H2O = [phosphate](n-1) + phosphate + H(+). Nucleotidase with a broad substrate specificity as it can dephosphorylate various ribo- and deoxyribonucleoside 5'-monophosphates and ribonucleoside 3'-monophosphates with highest affinity to 3'-AMP. Also hydrolyzes polyphosphate (exopolyphosphatase activity) with the preference for short-chain-length substrates (P20-25). Might be involved in the regulation of dNTP and NTP pools, and in the turnover of 3'-mononucleotides produced by numerous intracellular RNases (T1, T2, and F) during the degradation of various RNAs. This is 5'/3'-nucleotidase SurE from Shigella flexneri serotype 5b (strain 8401).